We begin with the raw amino-acid sequence, 280 residues long: Monoacylglycerol lipase (280 aa).

Residue Ser111 is the Nucleophile of the active site. Active-site charge relay system residues include Asp227 and His257.

It belongs to the AB hydrolase superfamily.

The protein localises to the secreted. Its subcellular location is the cell wall. It carries out the reaction Hydrolyzes glycerol monoesters of long-chain fatty acids.. Its function is as follows. Contributes to cell growth, probably by hydrolyzing exogenous lipids. Catalyzes the hydrolysis of monoacylglycerols (MAG) with fatty acid chains ranging from C14 to C18, with a maximum activity on monoolein. Is unable to hydrolyze long-chain diacylglycerol (DAG). In Mycolicibacterium smegmatis (strain ATCC 700084 / mc(2)155) (Mycobacterium smegmatis), this protein is Monoacylglycerol lipase.